Consider the following 228-residue polypeptide: MAIPANEIDLARYLEHSLLHPAATEAQVKECCEAAVQFDFPAVCLYPTAIKTARDFLHQRPIQICSVVGFPAGAHTTATKLYEAQEAVENGATELDVMLNLAFVKMGESEKLYQEVAQIVELTKVPIKGILETALLTDTEKRLAAEICLDAGVSYLKTSTGWFGGTTVADVKLLYGITKGRIGIKAAGGIKTVDQAIALIQAGATRLGTSRSIKIMQEREQVSDNPTW.

Asp96 acts as the Proton donor/acceptor in catalysis. Lys157 functions as the Schiff-base intermediate with acetaldehyde in the catalytic mechanism. Lys185 acts as the Proton donor/acceptor in catalysis.

It belongs to the DeoC/FbaB aldolase family. DeoC type 1 subfamily.

The protein localises to the cytoplasm. It carries out the reaction 2-deoxy-D-ribose 5-phosphate = D-glyceraldehyde 3-phosphate + acetaldehyde. Its pathway is carbohydrate degradation; 2-deoxy-D-ribose 1-phosphate degradation; D-glyceraldehyde 3-phosphate and acetaldehyde from 2-deoxy-alpha-D-ribose 1-phosphate: step 2/2. Its function is as follows. Catalyzes a reversible aldol reaction between acetaldehyde and D-glyceraldehyde 3-phosphate to generate 2-deoxy-D-ribose 5-phosphate. The chain is Deoxyribose-phosphate aldolase from Picosynechococcus sp. (strain ATCC 27264 / PCC 7002 / PR-6) (Agmenellum quadruplicatum).